A 308-amino-acid chain; its full sequence is MKVIFAGTPDFAAAALKAVAAAGFEIPLVLTQPDRPKGRGMQLTAPPVKQAALELGLRVAQPEKLRNNAEALQMLKEVEADVMVVAAYGLILPQDVLDTPKHGCLNIHASLLPRWRGAAPIQRAIEAGDAETGVCIMQMDIGLDTGDVVSEHRYAIQPTDTANEVHDALMEIGAAAVVADLQQLQSKGRLNAVKQPEEGVTYAQKLSKEEARIDWSESADIIERKIRAFNPVPAAWVEYQGKPMKIRRAEVVAQQGTAGEVLSCSADGLVVACGESALKITELQPAGGRRMNIAAFAAGRSIEAGAKL.

110-113 (SLLP) contributes to the (6S)-5,6,7,8-tetrahydrofolate binding site.

Belongs to the Fmt family.

The catalysed reaction is L-methionyl-tRNA(fMet) + (6R)-10-formyltetrahydrofolate = N-formyl-L-methionyl-tRNA(fMet) + (6S)-5,6,7,8-tetrahydrofolate + H(+). Its function is as follows. Attaches a formyl group to the free amino group of methionyl-tRNA(fMet). The formyl group appears to play a dual role in the initiator identity of N-formylmethionyl-tRNA by promoting its recognition by IF2 and preventing the misappropriation of this tRNA by the elongation apparatus. This is Methionyl-tRNA formyltransferase from Neisseria gonorrhoeae (strain NCCP11945).